A 556-amino-acid polypeptide reads, in one-letter code: Arginine--tRNA ligase (556 aa).

A 'HIGH' region motif is present at residues 132-142 (ANPTGDLHLGH).

This sequence belongs to the class-I aminoacyl-tRNA synthetase family. As to quaternary structure, monomer.

The protein localises to the cytoplasm. It carries out the reaction tRNA(Arg) + L-arginine + ATP = L-arginyl-tRNA(Arg) + AMP + diphosphate. The chain is Arginine--tRNA ligase from Listeria monocytogenes serotype 4a (strain HCC23).